The sequence spans 160 residues: Ubiquitin-like protein ATG12 (160 aa).

The tract at residues 1 to 40 (MSETPKDQGPSSPSPSPSPSAASPMPLADNEVAGSGASSP) is disordered. Glycine 160 is covalently cross-linked (Glycyl lysine isopeptide (Gly-Lys) (interchain with K-102 in ATG5)).

The protein belongs to the ATG12 family. Forms a conjugate with ATG5. Forms a thioester bond with the 'Cys-196' of ATG10. Interacts with the ATG7 C-terminal 40 amino acids domain. The ATG12-ATG5 conjugate forms a complex with several units of ATG16. The ATG12-ATG5 conjugate also associates with ATG3.

The protein localises to the preautophagosomal structure membrane. In terms of biological role, ubiquitin-like protein involved in cytoplasm to vacuole transport (Cvt), autophagy vesicles formation, mitophagy, and nucleophagy. Conjugation with ATG5 through a ubiquitin-like conjugating system involving also ATG7 as an E1-like activating enzyme and ATG10 as an E2-like conjugating enzyme, is essential for its function. The ATG12-ATG5 conjugate acts as an E3-like enzyme which is required for lipidation of ATG8 and ATG8 association to the vesicle membranes. ATG12-ATG5 rearranges the ATG3 catalytic center and enhances its E2 activity. Autophagy is required for proper vegetative growth, asexual/sexual reproduction, and full virulence. Autophagy is particularly involved in the biosynthesis of deoxynivalenol (DON), an important virulence determinant. The chain is Ubiquitin-like protein ATG12 from Gibberella zeae (strain ATCC MYA-4620 / CBS 123657 / FGSC 9075 / NRRL 31084 / PH-1) (Wheat head blight fungus).